The primary structure comprises 146 residues: VHLTGEEKSLVTGLWGKVNVDEVGGEALGRLLVVYPWTQRFFDSFGDLSSADAIMNNPKVKAHGKKVLNSFSDGLKNLDNLKGTFAKLSELHCDKLHVDPENFKLLGNVLVCVLAHHFGKEFTPQVQAAYQKVVAGVANALAHKYH.

An N-acetylvaline modification is found at Val1. Positions 2 to 146 constitute a Globin domain; that stretch reads HLTGEEKSLV…VANALAHKYH (145 aa). Thr12 is subject to Phosphothreonine. Phosphoserine is present on Ser44. At Lys59 the chain carries N6-acetyllysine. Residue His63 coordinates heme b. An N6-acetyllysine modification is found at Lys82. Position 92 (His92) interacts with heme b. Cys93 bears the S-nitrosocysteine mark. Lys144 carries the post-translational modification N6-acetyllysine.

It belongs to the globin family. As to quaternary structure, heterotetramer of two alpha chains and two beta chains. In terms of tissue distribution, red blood cells.

Its function is as follows. Involved in oxygen transport from the lung to the various peripheral tissues. The sequence is that of Hemoglobin subunit beta (HBB) from Ursus maritimus (Polar bear).